The following is a 145-amino-acid chain: D-aminoacyl-tRNA deacylase (145 aa).

The Gly-cisPro motif, important for rejection of L-amino acids signature appears at 137-138 (GP).

Belongs to the DTD family. As to quaternary structure, homodimer.

It is found in the cytoplasm. The enzyme catalyses glycyl-tRNA(Ala) + H2O = tRNA(Ala) + glycine + H(+). It carries out the reaction a D-aminoacyl-tRNA + H2O = a tRNA + a D-alpha-amino acid + H(+). Its function is as follows. An aminoacyl-tRNA editing enzyme that deacylates mischarged D-aminoacyl-tRNAs. Also deacylates mischarged glycyl-tRNA(Ala), protecting cells against glycine mischarging by AlaRS. Acts via tRNA-based rather than protein-based catalysis; rejects L-amino acids rather than detecting D-amino acids in the active site. By recycling D-aminoacyl-tRNA to D-amino acids and free tRNA molecules, this enzyme counteracts the toxicity associated with the formation of D-aminoacyl-tRNA entities in vivo and helps enforce protein L-homochirality. The sequence is that of D-aminoacyl-tRNA deacylase from Pseudomonas aeruginosa (strain UCBPP-PA14).